The primary structure comprises 124 residues: Iron-sulfur cluster insertion protein ErpA (124 aa).

Residues cysteine 52, cysteine 116, and cysteine 118 each contribute to the iron-sulfur cluster site.

The protein belongs to the HesB/IscA family. As to quaternary structure, homodimer. Requires iron-sulfur cluster as cofactor.

Functionally, required for insertion of 4Fe-4S clusters for at least IspG. The sequence is that of Iron-sulfur cluster insertion protein ErpA from Acidithiobacillus ferrooxidans (strain ATCC 23270 / DSM 14882 / CIP 104768 / NCIMB 8455) (Ferrobacillus ferrooxidans (strain ATCC 23270)).